The chain runs to 269 residues: uncharacterized protein (269 aa).

To T.pallidum TP0678.

This is an uncharacterized protein from Borreliella burgdorferi (strain ATCC 35210 / DSM 4680 / CIP 102532 / B31) (Borrelia burgdorferi).